Consider the following 865-residue polypeptide: DNA topoisomerase 1 (865 aa).

In terms of domain architecture, Toprim spans 3–142 (KALVIVESPA…RYSRVVFNEI (140 aa)). E9 is a Mg(2+) binding site. Positions 37–65 (LPTSGSAAKKSADSTSTKTAKKPKKDERG) are disordered. A compositionally biased stretch (low complexity) spans 39–54 (TSGSAAKKSADSTSTK). D111 serves as a coordination point for Mg(2+). Positions 158–575 (NINRVNAQQA…NFFSDFTQQL (418 aa)) constitute a Topo IA-type catalytic domain. The segment at 192 to 197 (SAGRVQ) is interaction with DNA. Catalysis depends on Y319, which acts as the O-(5'-phospho-DNA)-tyrosine intermediate. C4-type zinc fingers lie at residues 599–630 (CPTC…KERC), 662–689 (CQKC…NPTC), and 711–736 (CEKC…NDEC).

Belongs to the type IA topoisomerase family. As to quaternary structure, monomer. Mg(2+) is required as a cofactor.

The catalysed reaction is ATP-independent breakage of single-stranded DNA, followed by passage and rejoining.. Functionally, releases the supercoiling and torsional tension of DNA, which is introduced during the DNA replication and transcription, by transiently cleaving and rejoining one strand of the DNA duplex. Introduces a single-strand break via transesterification at a target site in duplex DNA. The scissile phosphodiester is attacked by the catalytic tyrosine of the enzyme, resulting in the formation of a DNA-(5'-phosphotyrosyl)-enzyme intermediate and the expulsion of a 3'-OH DNA strand. The free DNA strand then undergoes passage around the unbroken strand, thus removing DNA supercoils. Finally, in the religation step, the DNA 3'-OH attacks the covalent intermediate to expel the active-site tyrosine and restore the DNA phosphodiester backbone. This chain is DNA topoisomerase 1, found in Salmonella typhimurium (strain LT2 / SGSC1412 / ATCC 700720).